Consider the following 567-residue polypeptide: Glutamine--tRNA ligase (567 aa).

Residues 47-57 (PEPNGYLHIGH) carry the 'HIGH' region motif. Residues 48-50 (EPN) and 54-60 (HIGHAKS) each bind ATP. The L-glutamine site is built by Asp80 and Tyr225. Residues Thr244 and 274-275 (RL) each bind ATP. A 'KMSKS' region motif is present at residues 281-285 (ITSKR).

The protein belongs to the class-I aminoacyl-tRNA synthetase family. As to quaternary structure, monomer.

The protein localises to the cytoplasm. It carries out the reaction tRNA(Gln) + L-glutamine + ATP = L-glutaminyl-tRNA(Gln) + AMP + diphosphate. This is Glutamine--tRNA ligase from Pseudomonas putida (strain ATCC 47054 / DSM 6125 / CFBP 8728 / NCIMB 11950 / KT2440).